The primary structure comprises 623 residues: Regulatory solute carrier protein family 1 member 1 (623 aa).

Composition is skewed to polar residues over residues 1-16 (MSSLPTSDGFNHQAHP), 83-99 (CASSADNAPANQTPAIP), and 133-144 (EASLSVTTTRMQ). Disordered regions lie at residues 1-48 (MSSL…PDSI), 71-99 (RKEQLPLQDPSDCASSADNAPANQTPAIP), 116-189 (SAEG…APHD), and 433-493 (EELT…PHCT). Basic and acidic residues-rich tracts occupy residues 150 to 159 (IGEKGWHPEY), 170 to 180 (QHEEPRNEQHE), and 460 to 473 (LVDKENVPRSRESV). Residues 474–491 (NESSLVTLDSAKTSNQPH) are compositionally biased toward polar residues. Residues 577–617 (IFPAADIDRILRAGFTLQEALGALHRVGGNADLALLVLLAK) form the UBA domain.

As to quaternary structure, interacts with YRDC. In terms of tissue distribution, renal outer cortex and outer medulla, small intestine and liver.

It localises to the cell membrane. The protein resides in the nucleus. The protein localises to the golgi apparatus. Its subcellular location is the trans-Golgi network. Mediates transcriptional and post-transcriptional regulation of SLC5A1. Inhibits a dynamin and PKC-dependent exocytotic pathway of SLC5A1. Also involved in transcriptional regulation of SLC22A2. Exhibits glucose-dependent, short-term inhibition of SLC5A1 and SLC22A2 by inhibiting the release of vesicles from the trans-Golgi network. This Sus scrofa (Pig) protein is Regulatory solute carrier protein family 1 member 1 (RSC1A1).